The primary structure comprises 398 residues: Argininosuccinate synthase (398 aa).

8 to 16 (AYSGGLDTS) serves as a coordination point for ATP. Residue Y87 participates in L-citrulline binding. G117 lines the ATP pocket. L-aspartate is bound by residues T119, N123, and D124. Residue N123 coordinates L-citrulline. Residues R127, S175, E260, and Y272 each coordinate L-citrulline.

It belongs to the argininosuccinate synthase family. Type 1 subfamily. Homotetramer.

It localises to the cytoplasm. It catalyses the reaction L-citrulline + L-aspartate + ATP = 2-(N(omega)-L-arginino)succinate + AMP + diphosphate + H(+). It functions in the pathway amino-acid biosynthesis; L-arginine biosynthesis; L-arginine from L-ornithine and carbamoyl phosphate: step 2/3. This chain is Argininosuccinate synthase, found in Mycobacterium marinum (strain ATCC BAA-535 / M).